The primary structure comprises 564 residues: uncharacterized protein (564 aa).

The N-terminal stretch at Met1 to Ser21 is a signal peptide. Cys22 carries the N-palmitoyl cysteine lipid modification. A lipid anchor (S-diacylglycerol cysteine) is attached at Cys22.

It localises to the cell membrane. This is an uncharacterized protein from Aquifex aeolicus (strain VF5).